A 346-amino-acid chain; its full sequence is Melanoma-associated antigen B3 (346 aa).

Positions 1-35 are disordered; that stretch reads MPRGQKSTLHAREKRQQTRGQTQDHQGAQITATNK. A compositionally biased stretch (polar residues) spans 18-33; sequence TRGQTQDHQGAQITAT. The MAGE domain occupies 111 to 310; the sequence is LIMKTNMLVQ…SAFQFWYEEA (200 aa).

In terms of tissue distribution, expressed in testis.

In Homo sapiens (Human), this protein is Melanoma-associated antigen B3 (MAGEB3).